We begin with the raw amino-acid sequence, 1101 residues long: ATP-dependent DNA helicase mph1 (1101 aa).

Disordered stretches follow at residues 22 to 59, 95 to 138, 154 to 231, and 250 to 270; these read PGTS…SPDR, LTQP…QYHD, FEEE…TNRP, and SSQR…PTHH. Over residues 24–48 the composition is skewed to polar residues; sequence TSDTVESVQTNNRPAKQSDISISQG. Residues 170–190 show a composition bias toward low complexity; that stretch reads TPARTAAAPCAAPKGTAADVP. Residues 191-202 show a composition bias toward acidic residues; that stretch reads FDLDDIPDDAFD. Positions 209–228 are enriched in polar residues; the sequence is PPRSTSQATRGPPVQSQFRT. Residues 296–464 enclose the Helicase ATP-binding domain; that stretch reads IAQRGLFHNL…AIIDDLGIAK (169 aa). Residue 309–316 participates in ATP binding; sequence LPTGLGKT. Positions 412-415 match the DEAH box motif; it reads DEAH. Positions 634-808 constitute a Helicase C-terminal domain; the sequence is YLKQVVLNHF…GTRFTFHDDK (175 aa). 2 disordered regions span residues 824 to 890 and 991 to 1067; these read RQID…PTPE and SRDP…QDAF. Positions 842-854 are enriched in basic residues; it reads RRARPPKRPPKKF.

The protein belongs to the DEAD box helicase family. DEAH subfamily. FANCM sub-subfamily. As to quaternary structure, interacts with the MHF histone-fold complex to form the FANCM-MHF complex.

It localises to the nucleus. The enzyme catalyses ATP + H2O = ADP + phosphate + H(+). Functionally, ATP-dependent DNA helicase involved in DNA damage repair by homologous recombination and in genome maintenance. Capable of unwinding D-loops. Plays a role in limiting crossover recombinants during mitotic DNA double-strand break (DSB) repair. Component of a FANCM-MHF complex which promotes gene conversion at blocked replication forks, probably by reversal of the stalled fork. This Aspergillus fumigatus (strain CBS 144.89 / FGSC A1163 / CEA10) (Neosartorya fumigata) protein is ATP-dependent DNA helicase mph1.